Here is a 780-residue protein sequence, read N- to C-terminus: ATPase family gene 2 protein (780 aa).

Low complexity predominate over residues 1–23 (MAPKSSSSGSKKKSSASSNSADA). Positions 1–26 (MAPKSSSSGSKKKSSASSNSADAKAS) are disordered. ATP-binding positions include 286–293 (GPPGTGKT) and 557–564 (GPPGCSKT).

The protein belongs to the AAA ATPase family. AFG2 subfamily. In terms of assembly, homohexamer; ATP binding induces oligomerization. Forms a ring-shaped particle of about 12 nm diameter, that displays 6-fold radial symmetry. Associates with cytoplasmic pre-60S ribosomal particles containing ARX1, ALB1, RLP24 and NOG1. Binds to pre-60S ribosomal particles soon after their export from the nucleus and is released before REI1 and LSG1 are incorporated into the particles. Hexameric form interacts with RLP24 (via C-terminal); the interaction recruits AFG2 to pre-60S ribosomal particles and promotes AFG2 ATPase activity and RLP24 release from pre-60S ribosomal particles. Interacts (via N-terminus) with nucleoporin NUP116 (via N-terminus); the interaction is required for RLP24 release from pre-60S ribosomal particles.

Its subcellular location is the cytoplasm. It carries out the reaction ATP + H2O = ADP + phosphate + H(+). With respect to regulation, the hexamer is activated by RLP24 during pre-60S ribosomal particle maturation; RLP24 activates ATPase activity of both ATP-binding regions and increases cooperativity between AFG2 subunits. The second ATP-binding region is inhibited by diazaborine; the inhibition requires prior ATP binding specifically to the second ATP-binding region. Its function is as follows. ATP-dependent chaperone which uses the energy provided by ATP hydrolysis to generate mechanical force to disassemble protein complexes. Plays an essential role in the cytoplasmic maturation steps of pre-60S ribosomal particles by promoting the release of shuttling protein RLP24 from the pre-ribosomal particles. This step facilitates the subsequent release of other shuttling proteins such as NOG1 and allows the transition of the pre-ribosomal particles to later maturation forms that bind REI1. Essential for viability. The sequence is that of ATPase family gene 2 protein from Saccharomyces cerevisiae (strain ATCC 204508 / S288c) (Baker's yeast).